Here is a 705-residue protein sequence, read N- to C-terminus: Elongation factor G (705 aa).

One can recognise a tr-type G domain in the interval 8–294 (DRYRNFGIMA…AVIDYLPSPL (287 aa)). Residues 17–24 (AHIDAGKT), 92–96 (DTPGH), and 146–149 (NKMD) contribute to the GTP site.

It belongs to the TRAFAC class translation factor GTPase superfamily. Classic translation factor GTPase family. EF-G/EF-2 subfamily.

Its subcellular location is the cytoplasm. Functionally, catalyzes the GTP-dependent ribosomal translocation step during translation elongation. During this step, the ribosome changes from the pre-translocational (PRE) to the post-translocational (POST) state as the newly formed A-site-bound peptidyl-tRNA and P-site-bound deacylated tRNA move to the P and E sites, respectively. Catalyzes the coordinated movement of the two tRNA molecules, the mRNA and conformational changes in the ribosome. This is Elongation factor G from Dinoroseobacter shibae (strain DSM 16493 / NCIMB 14021 / DFL 12).